The primary structure comprises 406 residues: Tryptophan 2,3-dioxygenase (406 aa).

Residues phenylalanine 72–histidine 76 and arginine 144 contribute to the substrate site. Histidine 328 is a binding site for heme. Threonine 342 serves as a coordination point for substrate.

This sequence belongs to the tryptophan 2,3-dioxygenase family. As to quaternary structure, homotetramer. Dimer of dimers. Heme is required as a cofactor.

The catalysed reaction is L-tryptophan + O2 = N-formyl-L-kynurenine. It functions in the pathway amino-acid degradation; L-tryptophan degradation via kynurenine pathway; L-kynurenine from L-tryptophan: step 1/2. Its function is as follows. Heme-dependent dioxygenase that catalyzes the oxidative cleavage of the L-tryptophan (L-Trp) pyrrole ring and converts L-tryptophan to N-formyl-L-kynurenine. Catalyzes the oxidative cleavage of the indole moiety. This chain is Tryptophan 2,3-dioxygenase, found in Xenopus tropicalis (Western clawed frog).